Reading from the N-terminus, the 449-residue chain is Glycine--tRNA ligase (449 aa).

Residues Arg100 and Glu158 each coordinate substrate. Residues 190 to 192, 200 to 205, 275 to 276, and 319 to 322 each bind ATP; these read RNE, FRVREF, EL, and GIER. 205 to 209 is a binding site for substrate; that stretch reads FEQFE. 315–319 is a binding site for substrate; it reads EPSVG.

It belongs to the class-II aminoacyl-tRNA synthetase family. In terms of assembly, homodimer.

It is found in the cytoplasm. The enzyme catalyses tRNA(Gly) + glycine + ATP = glycyl-tRNA(Gly) + AMP + diphosphate. In terms of biological role, catalyzes the attachment of glycine to tRNA(Gly). The protein is Glycine--tRNA ligase of Mycoplasma pneumoniae (strain ATCC 29342 / M129 / Subtype 1) (Mycoplasmoides pneumoniae).